The sequence spans 84 residues: Cell division protein CrgA (84 aa).

A run of 2 helical transmembrane segments spans residues 31-51 and 60-80; these read VAPV…VFYV and ALDN…FGVS.

It belongs to the CrgA family.

It localises to the cell membrane. Its function is as follows. Involved in cell division. Coordinates growth and cell division. Required for the formation of the sporulation septa. The polypeptide is Cell division protein CrgA (Streptomyces avermitilis (strain ATCC 31267 / DSM 46492 / JCM 5070 / NBRC 14893 / NCIMB 12804 / NRRL 8165 / MA-4680)).